The primary structure comprises 227 residues: Cytochrome c oxidase subunit 2 (227 aa).

Over 1–26 (MNTWMNFNLQNSNSPLMEQLMFFHNH) the chain is Mitochondrial intermembrane. Residues 27-48 (SMLIILLITILVGYIMSSLLYN) traverse the membrane as a helical segment. The Mitochondrial matrix segment spans residues 49 to 62 (KLYNRYLLESQNVE). Residues 63–82 (IIWTILPAFMLIFIALPSLR) traverse the membrane as a helical segment. Residues 83–227 (LLYLLDDSNS…SFIKWISSNS (145 aa)) lie on the Mitochondrial intermembrane side of the membrane. 6 residues coordinate Cu cation: His161, Cys196, Glu198, Cys200, His204, and Met207. Glu198 provides a ligand contact to Mg(2+).

The protein belongs to the cytochrome c oxidase subunit 2 family. As to quaternary structure, component of the cytochrome c oxidase (complex IV, CIV), a multisubunit enzyme composed of a catalytic core of 3 subunits and several supernumerary subunits. The complex exists as a monomer or a dimer and forms supercomplexes (SCs) in the inner mitochondrial membrane with ubiquinol-cytochrome c oxidoreductase (cytochrome b-c1 complex, complex III, CIII). Requires Cu cation as cofactor.

Its subcellular location is the mitochondrion inner membrane. The catalysed reaction is 4 Fe(II)-[cytochrome c] + O2 + 8 H(+)(in) = 4 Fe(III)-[cytochrome c] + 2 H2O + 4 H(+)(out). Functionally, component of the cytochrome c oxidase, the last enzyme in the mitochondrial electron transport chain which drives oxidative phosphorylation. The respiratory chain contains 3 multisubunit complexes succinate dehydrogenase (complex II, CII), ubiquinol-cytochrome c oxidoreductase (cytochrome b-c1 complex, complex III, CIII) and cytochrome c oxidase (complex IV, CIV), that cooperate to transfer electrons derived from NADH and succinate to molecular oxygen, creating an electrochemical gradient over the inner membrane that drives transmembrane transport and the ATP synthase. Cytochrome c oxidase is the component of the respiratory chain that catalyzes the reduction of oxygen to water. Electrons originating from reduced cytochrome c in the intermembrane space (IMS) are transferred via the dinuclear copper A center (CU(A)) of subunit 2 and heme A of subunit 1 to the active site in subunit 1, a binuclear center (BNC) formed by heme A3 and copper B (CU(B)). The BNC reduces molecular oxygen to 2 water molecules using 4 electrons from cytochrome c in the IMS and 4 protons from the mitochondrial matrix. This Ctenocephalides felis (Cat flea) protein is Cytochrome c oxidase subunit 2 (COII).